The chain runs to 483 residues: Dual specificity protein phosphatase 10 (483 aa).

The Rhodanese domain maps to 169-286 (PSQGPVIIDC…FKQNHGNLCD (118 aa)). An interaction with MAP kinases region spans residues 200 to 216 (KISRRRLQQGKITVLDL). In terms of domain architecture, Tyrosine-protein phosphatase spans 322–465 (ELTPILPFLF…LLEFEEDLNN (144 aa)). Cysteine 409 acts as the Phosphocysteine intermediate in catalysis.

Belongs to the protein-tyrosine phosphatase family. Non-receptor class dual specificity subfamily. Monomer. Interacts with MAPK14.

The protein localises to the cytoplasm. Its subcellular location is the nucleus. It carries out the reaction O-phospho-L-tyrosyl-[protein] + H2O = L-tyrosyl-[protein] + phosphate. The enzyme catalyses O-phospho-L-seryl-[protein] + H2O = L-seryl-[protein] + phosphate. The catalysed reaction is O-phospho-L-threonyl-[protein] + H2O = L-threonyl-[protein] + phosphate. In terms of biological role, protein phosphatase involved in the inactivation of MAP kinases. Has a specificity for the MAPK11/MAPK12/MAPK13/MAPK14 subfamily. It preferably dephosphorylates p38. This Mus musculus (Mouse) protein is Dual specificity protein phosphatase 10 (Dusp10).